The chain runs to 323 residues: Methionyl-tRNA formyltransferase (323 aa).

115–118 (SLLP) lines the (6S)-5,6,7,8-tetrahydrofolate pocket.

Belongs to the Fmt family.

The enzyme catalyses L-methionyl-tRNA(fMet) + (6R)-10-formyltetrahydrofolate = N-formyl-L-methionyl-tRNA(fMet) + (6S)-5,6,7,8-tetrahydrofolate + H(+). Functionally, attaches a formyl group to the free amino group of methionyl-tRNA(fMet). The formyl group appears to play a dual role in the initiator identity of N-formylmethionyl-tRNA by promoting its recognition by IF2 and preventing the misappropriation of this tRNA by the elongation apparatus. The sequence is that of Methionyl-tRNA formyltransferase from Blochmanniella floridana.